The sequence spans 1052 residues: Lateral signaling target protein 2 homolog (1052 aa).

Disordered stretches follow at residues Y311–H348, P379–S455, D506–A539, L551–F678, and N814–G973. Low complexity-rich tracts occupy residues S312 to S346, P379 to A392, and P400 to A419. The span at S422–S455 shows a compositional bias: acidic residues. Over residues P554–T574 the composition is skewed to polar residues. Phosphoserine occurs at positions 555 and 556. Basic residues-rich tracts occupy residues R588 to Q614 and S625 to R644. Residues S652–I661 show a composition bias toward polar residues. The span at N824–S842 shows a compositional bias: low complexity. S854 bears the Phosphoserine mark. A compositionally biased stretch (low complexity) spans Q872 to S915. The span at S926–G935 shows a compositional bias: polar residues. Low complexity predominate over residues S936–T963. An FYVE-type zinc finger spans residues D972–V1032. Residues C978, C981, C994, C997, C1002, C1005, C1024, and C1027 each contribute to the Zn(2+) site.

It belongs to the lst-2 family.

Its function is as follows. Negative regulator of epidermal growth factor receptor (EGFR) signaling. This chain is Lateral signaling target protein 2 homolog, found in Drosophila virilis (Fruit fly).